The chain runs to 498 residues: Serine hydroxymethyltransferase, mitochondrial (498 aa).

The residue at position 273 (lysine 273) is an N6-(pyridoxal phosphate)lysine.

It belongs to the SHMT family. As to quaternary structure, homotetramer. The cofactor is pyridoxal 5'-phosphate.

Its subcellular location is the mitochondrion. The catalysed reaction is (6R)-5,10-methylene-5,6,7,8-tetrahydrofolate + glycine + H2O = (6S)-5,6,7,8-tetrahydrofolate + L-serine. Its pathway is one-carbon metabolism; tetrahydrofolate interconversion. In terms of biological role, interconversion of serine and glycine. The polypeptide is Serine hydroxymethyltransferase, mitochondrial (SHM1) (Kluyveromyces lactis (strain ATCC 8585 / CBS 2359 / DSM 70799 / NBRC 1267 / NRRL Y-1140 / WM37) (Yeast)).